The chain runs to 367 residues: Cell division protein FtsZ (367 aa).

GTP-binding positions include G17–N21, G104–G106, E135, K139, and D183.

The protein belongs to the FtsZ family. In terms of assembly, homodimer. Polymerizes to form a dynamic ring structure in a strictly GTP-dependent manner. Interacts directly with several other division proteins.

The protein resides in the cytoplasm. In terms of biological role, essential cell division protein that forms a contractile ring structure (Z ring) at the future cell division site. The regulation of the ring assembly controls the timing and the location of cell division. One of the functions of the FtsZ ring is to recruit other cell division proteins to the septum to produce a new cell wall between the dividing cells. Binds GTP and shows GTPase activity. The chain is Cell division protein FtsZ from Aquifex aeolicus (strain VF5).